The chain runs to 378 residues: Erythronate-4-phosphate dehydrogenase (378 aa).

Substrate-binding residues include serine 45 and threonine 66. 2 residues coordinate NAD(+): aspartate 146 and threonine 175. Residue arginine 208 is part of the active site. Aspartate 232 is an NAD(+) binding site. The active site involves glutamate 237. The active-site Proton donor is the histidine 254. An NAD(+)-binding site is contributed by glycine 257. Tyrosine 258 lines the substrate pocket.

It belongs to the D-isomer specific 2-hydroxyacid dehydrogenase family. PdxB subfamily. Homodimer.

The protein localises to the cytoplasm. It catalyses the reaction 4-phospho-D-erythronate + NAD(+) = (R)-3-hydroxy-2-oxo-4-phosphooxybutanoate + NADH + H(+). The protein operates within cofactor biosynthesis; pyridoxine 5'-phosphate biosynthesis; pyridoxine 5'-phosphate from D-erythrose 4-phosphate: step 2/5. Its function is as follows. Catalyzes the oxidation of erythronate-4-phosphate to 3-hydroxy-2-oxo-4-phosphonooxybutanoate. This Escherichia fergusonii (strain ATCC 35469 / DSM 13698 / CCUG 18766 / IAM 14443 / JCM 21226 / LMG 7866 / NBRC 102419 / NCTC 12128 / CDC 0568-73) protein is Erythronate-4-phosphate dehydrogenase.